The primary structure comprises 368 residues: Alanine racemase (368 aa).

The active-site Proton acceptor; specific for D-alanine is the K40. K40 bears the N6-(pyridoxal phosphate)lysine mark. R134 is a substrate binding site. The Proton acceptor; specific for L-alanine role is filled by Y263. A substrate-binding site is contributed by M310.

The protein belongs to the alanine racemase family. Pyridoxal 5'-phosphate serves as cofactor.

It carries out the reaction L-alanine = D-alanine. The protein operates within amino-acid biosynthesis; D-alanine biosynthesis; D-alanine from L-alanine: step 1/1. Functionally, catalyzes the interconversion of L-alanine and D-alanine. May also act on other amino acids. The chain is Alanine racemase (alr) from Listeria monocytogenes serotype 4a (strain HCC23).